A 61-amino-acid polypeptide reads, in one-letter code: Large ribosomal subunit protein uL30 (61 aa).

Belongs to the universal ribosomal protein uL30 family. Part of the 50S ribosomal subunit.

This Frankia casuarinae (strain DSM 45818 / CECT 9043 / HFP020203 / CcI3) protein is Large ribosomal subunit protein uL30.